We begin with the raw amino-acid sequence, 88 residues long: Large ribosomal subunit protein bL31B (88 aa).

This sequence belongs to the bacterial ribosomal protein bL31 family. Type B subfamily. In terms of assembly, part of the 50S ribosomal subunit.

This is Large ribosomal subunit protein bL31B from Corynebacterium glutamicum (strain R).